The sequence spans 187 residues: MISSNDFRTGTTIELDGAVWRVVEFLHVKPGKGSAFVRTKLKAVQSGNVVEKTFRAGEMLPQAILEKATLQHTYMEGEDYVFMDMGTYEETRLSAKQIGESRKYLKEGMEVNVVSWNDKPLEVELPNSVVLEIKETDPGVKGDTATGGTKPAILETGAQVMVPLFLSIGEKIKVDTRNDTYLGRENS.

The protein belongs to the elongation factor P family.

It localises to the cytoplasm. It participates in protein biosynthesis; polypeptide chain elongation. Its function is as follows. Involved in peptide bond synthesis. Stimulates efficient translation and peptide-bond synthesis on native or reconstituted 70S ribosomes in vitro. Probably functions indirectly by altering the affinity of the ribosome for aminoacyl-tRNA, thus increasing their reactivity as acceptors for peptidyl transferase. The sequence is that of Elongation factor P from Synechococcus sp. (strain WH7803).